Reading from the N-terminus, the 324-residue chain is Glyoxylate/hydroxypyruvate reductase B (324 aa).

Catalysis depends on residues arginine 237 and glutamate 266. Histidine 285 serves as the catalytic Proton donor.

The protein belongs to the D-isomer specific 2-hydroxyacid dehydrogenase family. GhrB subfamily. In terms of assembly, homodimer.

It localises to the cytoplasm. The enzyme catalyses glycolate + NADP(+) = glyoxylate + NADPH + H(+). It catalyses the reaction (R)-glycerate + NAD(+) = 3-hydroxypyruvate + NADH + H(+). The catalysed reaction is (R)-glycerate + NADP(+) = 3-hydroxypyruvate + NADPH + H(+). In terms of biological role, catalyzes the NADPH-dependent reduction of glyoxylate and hydroxypyruvate into glycolate and glycerate, respectively. This Salmonella heidelberg (strain SL476) protein is Glyoxylate/hydroxypyruvate reductase B.